A 321-amino-acid polypeptide reads, in one-letter code: uncharacterized protein (321 aa).

Tyrosine 60 acts as the Proton donor in catalysis. Substrate is bound at residue histidine 118.

This sequence belongs to the aldo/keto reductase family.

This is an uncharacterized protein from Schizosaccharomyces pombe (strain 972 / ATCC 24843) (Fission yeast).